An 87-amino-acid chain; its full sequence is Retinal rod rhodopsin-sensitive cGMP 3',5'-cyclic phosphodiesterase subunit gamma (87 aa).

Met1 is subject to N-acetylmethionine. Residues 16–54 are disordered; that stretch reads VVGGPVTPRKGPPKFKQRQTRQFKSKPPKKGVQGFGDDI. Positions 26-44 are enriched in basic residues; it reads GPPKFKQRQTRQFKSKPPK.

This sequence belongs to the rod/cone cGMP-PDE gamma subunit family. In terms of assembly, oligomer composed of two catalytic chains (alpha and beta), an inhibitory chain (gamma) and the delta chain.

It carries out the reaction 3',5'-cyclic GMP + H2O = GMP + H(+). In terms of biological role, participates in processes of transmission and amplification of the visual signal. cGMP-PDEs are the effector molecules in G-protein-mediated phototransduction in vertebrate rods and cones. This chain is Retinal rod rhodopsin-sensitive cGMP 3',5'-cyclic phosphodiesterase subunit gamma (PDE6G), found in Cavia porcellus (Guinea pig).